The primary structure comprises 81 residues: Acyl carrier protein 2 (81 aa).

Positions 1–79 (MTETEILERI…DVIGAVQSLL (79 aa)) constitute a Carrier domain. Ser39 carries the O-(pantetheine 4'-phosphoryl)serine modification.

Belongs to the acyl carrier protein (ACP) family. In terms of processing, 4'-phosphopantetheine is transferred from CoA to a specific serine of apo-ACP by AcpS. This modification is essential for activity because fatty acids are bound in thioester linkage to the sulfhydryl of the prosthetic group.

The protein resides in the cytoplasm. It functions in the pathway lipid metabolism; fatty acid biosynthesis. Functionally, carrier of the growing fatty acid chain in fatty acid biosynthesis. The sequence is that of Acyl carrier protein 2 from Ralstonia nicotianae (strain ATCC BAA-1114 / GMI1000) (Ralstonia solanacearum).